A 337-amino-acid polypeptide reads, in one-letter code: Phosphate acyltransferase (337 aa).

The protein belongs to the PlsX family. Homodimer. Probably interacts with PlsY.

The protein localises to the cytoplasm. The catalysed reaction is a fatty acyl-[ACP] + phosphate = an acyl phosphate + holo-[ACP]. Its pathway is lipid metabolism; phospholipid metabolism. Functionally, catalyzes the reversible formation of acyl-phosphate (acyl-PO(4)) from acyl-[acyl-carrier-protein] (acyl-ACP). This enzyme utilizes acyl-ACP as fatty acyl donor, but not acyl-CoA. The polypeptide is Phosphate acyltransferase (Listeria welshimeri serovar 6b (strain ATCC 35897 / DSM 20650 / CCUG 15529 / CIP 8149 / NCTC 11857 / SLCC 5334 / V8)).